Consider the following 159-residue polypeptide: Calcium-binding protein CML39 (159 aa).

4 consecutive EF-hand domains span residues 18-53, 54-89, 93-128, and 129-159; these read EKNRDLEAVFAYMDANRDGRISAEELKKSFKTLGEQ, MSDEEAEAAVKLSDIDGDGMLDINEFALLIKGNDEF, EKKRKIMEAFRMYIADGEDCITPGSLKMMLMKLGES, and RTTDDCKVMIQAFDLNADGVLSFDEFALMMR. The Ca(2+) site is built by aspartate 31, asparagine 33, aspartate 35, arginine 37, glutamate 42, aspartate 67, aspartate 69, aspartate 71, methionine 73, and glutamate 78. Ca(2+) is bound by residues aspartate 142, asparagine 144, aspartate 146, and glutamate 153.

Expressed in the zones of elongation and differentiation in seedling roots and at the root-hypocotyl junction. Expressed from stage 12 of flower development in anthers, specifically in pollen.

In terms of biological role, potential calcium sensor that binds calcium in vitro. The chain is Calcium-binding protein CML39 (CML39) from Arabidopsis thaliana (Mouse-ear cress).